Consider the following 318-residue polypeptide: Thioredoxin reductase (318 aa).

36–43 is an FAD binding site; sequence TGMQQGGQ. An intrachain disulfide couples Cys136 to Cys139. 286–295 serves as a coordination point for FAD; sequence DVMDHNYRQA.

This sequence belongs to the class-II pyridine nucleotide-disulfide oxidoreductase family. As to quaternary structure, homodimer. It depends on FAD as a cofactor.

It is found in the cytoplasm. The catalysed reaction is [thioredoxin]-dithiol + NADP(+) = [thioredoxin]-disulfide + NADPH + H(+). In Vibrio cholerae serotype O1 (strain ATCC 39315 / El Tor Inaba N16961), this protein is Thioredoxin reductase (trxB).